Here is a 468-residue protein sequence, read N- to C-terminus: BTB and MATH domain-containing protein 45 (468 aa).

The region spanning 7-124 (VFELSHVFKD…DDSIIIEVLV (118 aa)) is the MATH domain. BTB domains follow at residues 148-215 (SDGI…IDDD) and 304-368 (SDVI…IDDL).

This chain is BTB and MATH domain-containing protein 45 (bath-45), found in Caenorhabditis elegans.